The chain runs to 310 residues: Bifunctional protein FolD 3, chloroplastic (310 aa).

The N-terminal 48 residues, M1 to R48, are a transit peptide targeting the chloroplast.

Belongs to the tetrahydrofolate dehydrogenase/cyclohydrolase family. In terms of assembly, homodimer.

It is found in the plastid. The protein resides in the chloroplast. The catalysed reaction is (6R)-5,10-methylene-5,6,7,8-tetrahydrofolate + NADP(+) = (6R)-5,10-methenyltetrahydrofolate + NADPH. It catalyses the reaction (6R)-5,10-methenyltetrahydrofolate + H2O = (6R)-10-formyltetrahydrofolate + H(+). The protein operates within one-carbon metabolism; tetrahydrofolate interconversion. Its function is as follows. Catalyzes the oxidation of 5,10-methylenetetrahydrofolate to 5,10-methenyltetrahydrofolate and then the hydrolysis of 5,10-methenyltetrahydrofolate to 10-formyltetrahydrofolate. The chain is Bifunctional protein FolD 3, chloroplastic (FOLD3) from Arabidopsis thaliana (Mouse-ear cress).